A 350-amino-acid polypeptide reads, in one-letter code: uncharacterized protein (350 aa).

This is an uncharacterized protein from Sulfolobus islandicus filamentous virus (isolate Iceland/Hveragerdi) (SIFV).